The following is a 363-amino-acid chain: NAD(P)H-quinone oxidoreductase subunit 1, chloroplastic (363 aa).

6 helical membrane-spanning segments follow: residues 27-47 (IWLFIPIFTPVSGITIGVLVI), 98-118 (FSIGPSVVVISILLSHLVIPF), 127-147 (LSIGVSLWIAISSIAPIGLLM), 248-268 (YSGIKFGLFYLASYLNLLVSS), 300-320 (VFGTTISIFFTLAKAYLFLFI), and 336-356 (LLNLGWKFLLPIALGNLLLTT).

The protein belongs to the complex I subunit 1 family. As to quaternary structure, NDH is composed of at least 16 different subunits, 5 of which are encoded in the nucleus.

The protein resides in the plastid. It localises to the chloroplast thylakoid membrane. The catalysed reaction is a plastoquinone + NADH + (n+1) H(+)(in) = a plastoquinol + NAD(+) + n H(+)(out). It carries out the reaction a plastoquinone + NADPH + (n+1) H(+)(in) = a plastoquinol + NADP(+) + n H(+)(out). Functionally, NDH shuttles electrons from NAD(P)H:plastoquinone, via FMN and iron-sulfur (Fe-S) centers, to quinones in the photosynthetic chain and possibly in a chloroplast respiratory chain. The immediate electron acceptor for the enzyme in this species is believed to be plastoquinone. Couples the redox reaction to proton translocation, and thus conserves the redox energy in a proton gradient. In Amborella trichopoda, this protein is NAD(P)H-quinone oxidoreductase subunit 1, chloroplastic.